Reading from the N-terminus, the 689-residue chain is PR domain zinc finger protein 8 (689 aa).

The SET domain occupies 16–131; that stretch reads KAVQQCLTDI…KDEELLVWYG (116 aa). Y130 contacts S-adenosyl-L-methionine. A C2H2-type 1 zinc finger spans residues 155 to 183; it reads YTCLECSQRFQFEFPYVAHLRFRCPKRLH. Disordered regions lie at residues 185 to 333 and 397 to 506; these read ADIS…VGGR and SLQE…QPAR. Residues 193 to 210 show a composition bias toward gly residues; that stretch reads QGGGVGTKDHGGGGGGGK. Composition is skewed to low complexity over residues 241 to 258 and 273 to 286; these read PESS…AKPS and GGSS…LSSG. The segment covering 322–333 has biased composition (gly residues); that stretch reads EGGGGAGLVGGR. A compositionally biased stretch (low complexity) spans 423 to 433; that stretch reads STPAAASPVGA. The segment covering 472 to 491 has biased composition (gly residues); it reads TSGGGGTGAGAAGGAGGGQG. 2 C2H2-type zinc fingers span residues 625–648 and 666–688; these read NWCA…RSHH and LKCP…MTSH.

It belongs to the class V-like SAM-binding methyltransferase superfamily. In terms of assembly, interacts with EPM2A and NHLRC1. This interaction sequesters EPM2A and NHLRC1 to the nucleus. Interacts with BHLHE22. Expressed in brain, heart, skeletal muscle, testes, prostate.

The protein resides in the nucleus. Functionally, probable histone methyltransferase, preferentially acting on 'Lys-9' of histone H3. Involved in the control of steroidogenesis through transcriptional repression of steroidogenesis marker genes such as CYP17A1 and LHCGR. Forms with BHLHE22 a transcriptional repressor complex controlling genes involved in neural development and neuronal differentiation. In the retina, it is required for rod bipolar and type 2 OFF-cone bipolar cell survival. The sequence is that of PR domain zinc finger protein 8 (PRDM8) from Homo sapiens (Human).